A 367-amino-acid polypeptide reads, in one-letter code: N-acetylmuramoyl-L-alanine amidase BlyA (367 aa).

Residues 24–158 (VKKCVLHYTA…DITHKNCPAP (135 aa)) form the N-acetylmuramoyl-L-alanine amidase domain. Positions 178–204 (SGKSVSKASPTKPTTSSPSSSSAVSGS) are disordered. The span at 180–204 (KSVSKASPTKPTTSSPSSSSAVSGS) shows a compositional bias: low complexity. 2 consecutive SH3b domains span residues 202–271 (SGSL…YVDV) and 298–367 (GKIK…GSTI).

This sequence belongs to the N-acetylmuramoyl-L-alanine amidase 2 family.

It is found in the secreted. The enzyme catalyses Hydrolyzes the link between N-acetylmuramoyl residues and L-amino acid residues in certain cell-wall glycopeptides.. Autolysins are involved in some important biological processes such as cell separation, cell-wall turnover, competence for genetic transformation, formation of the flagella and sporulation. Involved in prophage SP-beta-mediated cell lysis. The chain is N-acetylmuramoyl-L-alanine amidase BlyA (blyA) from Bacillus subtilis (strain 168).